Here is a 342-residue protein sequence, read N- to C-terminus: Probable alcohol acetyltransferase (342 aa).

The transit peptide at 1-38 (MMILGKAGILAQYGTIYVRQNTIRNNLSSCIFKQSLCA) directs the protein to the mitochondrion. Residues 39 to 46 (FHSLAKVL) constitute a propeptide, removed in mature form. In terms of domain architecture, AB hydrolase-1 spans 75 to 326 (PPIIILHGLF…AGHWVNAEKP (252 aa)). Active-site charge relay system residues include S152 and H319.

It belongs to the AB hydrolase superfamily. Processed by both the mitochondrial processing peptidase (MPP) and the mitochondrial octapeptidyl aminopeptidase (OCT1).

The protein localises to the mitochondrion. Probable alcohol acetyltransferase that uses acetyl-CoA to synthesize acetate esters from various alcohols. Not involved in the synthesis of ethyl acetate. The sequence is that of Probable alcohol acetyltransferase (IMO32) from Saccharomyces cerevisiae (strain ATCC 204508 / S288c) (Baker's yeast).